We begin with the raw amino-acid sequence, 228 residues long: L-ribulose-5-phosphate 4-epimerase UlaF (228 aa).

Substrate contacts are provided by residues 26-27, 43-44, and 72-73; these read GN, SG, and SS. The Zn(2+) site is built by Asp74, His93, and His95. Asp118 serves as the catalytic Proton donor/acceptor. His167 provides a ligand contact to Zn(2+). Residue Tyr225 is the Proton donor/acceptor of the active site.

Belongs to the aldolase class II family. AraD/FucA subfamily. Requires Zn(2+) as cofactor.

It catalyses the reaction L-ribulose 5-phosphate = D-xylulose 5-phosphate. The protein operates within cofactor degradation; L-ascorbate degradation; D-xylulose 5-phosphate from L-ascorbate: step 4/4. Functionally, catalyzes the isomerization of L-ribulose 5-phosphate to D-xylulose 5-phosphate. Is involved in the anaerobic L-ascorbate utilization. In Shigella flexneri, this protein is L-ribulose-5-phosphate 4-epimerase UlaF.